The sequence spans 101 residues: Nucleoid-associated protein Bind_0255 (101 aa).

The protein belongs to the YbaB/EbfC family. In terms of assembly, homodimer.

Its subcellular location is the cytoplasm. The protein localises to the nucleoid. In terms of biological role, binds to DNA and alters its conformation. May be involved in regulation of gene expression, nucleoid organization and DNA protection. The chain is Nucleoid-associated protein Bind_0255 from Beijerinckia indica subsp. indica (strain ATCC 9039 / DSM 1715 / NCIMB 8712).